Here is a 445-residue protein sequence, read N- to C-terminus: MSDYLSVSALTKYIKYKFDQDPHLQSVLIKGELSNFKKHSSGHLYFNVKDKESVISAMMFKGSASKLNFEPKEGDEVLLEARVSVFERRGNYQIYVNKMQLDGIGNLYQKLEALKKKLTEEGCFDKANKKSIPKFPKKIAVLTASTGAAIRDIHSTINSRFPLAEQIQISTLVQGEKAKDDIIEKIEYADSLGVDTIIVGRGGGSIEDLWNFNEEAVVRAIYNCKTPIISAVGHETDFTLSDFAADIRAATPTQAAVIATPDQYELLQQIQQYQFTLTRFIKKHLEQQRKHVEHLSSYYKFKKPTLLYDQQIQRRDDLEKRLKQQIQATFEQQRHRLMLLQQRYNLKALLSSVNQEQQNNLQLTNQLVKLLNSKILSYKNDLKNKVENLNNLSPTNTMLRGYAIVNKKDEVITSTKDLTENDQLTLTMKDGLVDAKVTKVRCNND.

It belongs to the XseA family. In terms of assembly, heterooligomer composed of large and small subunits.

The protein resides in the cytoplasm. It catalyses the reaction Exonucleolytic cleavage in either 5'- to 3'- or 3'- to 5'-direction to yield nucleoside 5'-phosphates.. Its function is as follows. Bidirectionally degrades single-stranded DNA into large acid-insoluble oligonucleotides, which are then degraded further into small acid-soluble oligonucleotides. This is Exodeoxyribonuclease 7 large subunit from Staphylococcus aureus (strain JH1).